We begin with the raw amino-acid sequence, 367 residues long: GDP-perosamine synthase (367 aa).

At Lys-181 the chain carries N6-(pyridoxal phosphate)lysine.

It belongs to the DegT/DnrJ/EryC1 family. In terms of assembly, homotetramer. The cofactor is pyridoxal 5'-phosphate.

It carries out the reaction GDP-alpha-D-perosamine + 2-oxoglutarate = GDP-4-dehydro-alpha-D-rhamnose + L-glutamate. The protein operates within bacterial outer membrane biogenesis; LPS O-antigen biosynthesis. Catalyzes the synthesis of GDP-perosamine from GDP-4-keto-6-deoxy-D-mannose and L-glutamate. Also shows weak activity with L-glutamine. The protein is GDP-perosamine synthase of Vibrio cholerae.